Here is a 370-residue protein sequence, read N- to C-terminus: Putative transposase InsL for insertion sequence element IS186A (370 aa).

It belongs to the transposase 11 family.

Involved in the transposition of the insertion sequence IS186. The chain is Putative transposase InsL for insertion sequence element IS186A (insL1) from Escherichia coli (strain K12).